The chain runs to 723 residues: MQNSEGGADSPASVALRPSAAAPPVPASPQRVLVQAASSAPKGAQMQPVSLPRVQQVPQQVQPAQHVYPAQVQYVEGGDAVYTNGAIRTAYTYNPEPQMYAPSSAASYFEAPGGAQVTVAASSPPAVPSHSMVGITMDVGGSPIVSSTGAYLIHGGMDSTRHSLAHTSRSSPATLEMAIENLQKSEGITSHKSGLLNSHLQWLLDNYETAEGVSLPRSSLYNHYLRHCQEHKLDPVNAASFGKLIRSVFMGLRTRRLGTRGNSKYHYYGIRLKPDSPLNRLQEDTQYMAMRQQPMHQKPRYRPAQKTDSLGDSGSHSSLHSTPEQTMAAQSQHHQQYIDVSHVFPEFPAPDLGSVLLQDGVTLHDVKALQLVYRRHCEATVDVVMNLQFHYIEKLWLSFWNSKASSSDGPTSLPASDEDPEGAVLPKDKLISLCQCDPILRWMRSCDHILYQALVEILIPDVLRPVPSTLTQAIRNFAKSLEGWLTNAMSDFPQQVIQTKVGVVSAFAQTLRRYTSLNHLAQAARAVLQNTSQINQMLSDLNRVDFANVQEQASWVCQCEESVVQRLEQDFKLTLQQQSSLDQWASWLDSVVTQVLKQHAGSPSFPKAARQFLLKWSFYSSMVIRDLTLRSAASFGSFHLIRLLYDEYMFYLVEHRVAEATGETPIAVMGEFNDLASLSLTLLDKDDMGDERRGSEAGPDAHSLGEPLVKRERSDPNHSLQGI.

The interval 1–46 is disordered; it reads MQNSEGGADSPASVALRPSAAAPPVPASPQRVLVQAASSAPKGAQM. The segment covering 10–20 has biased composition (low complexity); sequence SPASVALRPSA. Ser-28 is subject to Phosphoserine. Residues 199 to 274 constitute a DNA-binding region (RFX-type winged-helix); that stretch reads HLQWLLDNYE…YHYYGIRLKP (76 aa). Residues 292–332 are disordered; it reads QQPMHQKPRYRPAQKTDSLGDSGSHSSLHSTPEQTMAAQSQ. Residues 307–322 show a composition bias toward low complexity; sequence TDSLGDSGSHSSLHST. Over residues 323-332 the composition is skewed to polar residues; the sequence is PEQTMAAQSQ. Position 416 is a phosphoserine (Ser-416). The segment at 689–723 is disordered; sequence GDERRGSEAGPDAHSLGEPLVKRERSDPNHSLQGI.

It belongs to the RFX family. In terms of assembly, homodimer; probably only forms homodimers in testis. Heterodimer; heterodimerizes with RFX1 and RFX3.

It localises to the nucleus. The protein localises to the cytoplasm. Its function is as follows. Transcription factor that acts as a key regulator of spermatogenesis. Acts by regulating expression of genes required for the haploid phase during spermiogenesis, such as genes required for cilium assembly and function. Recognizes and binds the X-box, a regulatory motif with DNA sequence 5'-GTNRCC(0-3N)RGYAAC-3' present on promoters. Probably activates transcription of the testis-specific histone gene H1-6. The sequence is that of DNA-binding protein RFX2 (RFX2) from Macaca fascicularis (Crab-eating macaque).